The sequence spans 319 residues: Ferrochelatase (319 aa).

His-194 and Glu-275 together coordinate Fe cation.

Belongs to the ferrochelatase family.

Its subcellular location is the cytoplasm. The enzyme catalyses heme b + 2 H(+) = protoporphyrin IX + Fe(2+). Its pathway is porphyrin-containing compound metabolism; protoheme biosynthesis; protoheme from protoporphyrin-IX: step 1/1. Functionally, catalyzes the ferrous insertion into protoporphyrin IX. In Hamiltonella defensa subsp. Acyrthosiphon pisum (strain 5AT), this protein is Ferrochelatase.